We begin with the raw amino-acid sequence, 271 residues long: Dipeptidyl-peptidase 6 (271 aa).

SH3b domains lie at 1–64 (MNAI…LFDD) and 72–140 (QKAQ…HPKI). In terms of domain architecture, NlpC/P60 spans 148–268 (HAFRENVVQT…DLATTITAIG (121 aa)). Cys-178 (nucleophile) is an active-site residue. The active-site Proton acceptor is the His-224. His-236 is a catalytic residue.

The protein belongs to the peptidase C40 family.

The protein localises to the cytoplasm. Its function is as follows. Involved in cell sporulation. Hydrolyzes gamma-D-Glu-L-(meso)A2pm linkages only in those peptide units that have a free N-terminal L-alanine. The chain is Dipeptidyl-peptidase 6 from Lysinibacillus sphaericus (Bacillus sphaericus).